Here is a 1457-residue protein sequence, read N- to C-terminus: ABC transporter G family member 36 (1457 aa).

The tract at residues 14–43 (RLGGSMRGDSGSMWRRGDDVFSRSSREEDD) is disordered. The span at 28–39 (RRGDDVFSRSSR) shows a compositional bias: basic and acidic residues. The region spanning 164–437 (GNALGILPNR…FESTGFKCPD (274 aa)) is the ABC transporter 1 domain. An ATP-binding site is contributed by 197-204 (GPPGSGKT). The 214-residue stretch at 515–728 (ELLKANIDRE…AQNAISVNEL (214 aa)) folds into the ABC transmembrane type-2 1 domain. The next 7 helical transmembrane spans lie at 533–553 (FVYM…MTLF), 565–585 (SGGI…FNGF), 621–641 (IPIT…VIGF), 653–673 (LLML…GGAA), 677–697 (IVAN…GGFI), 706–726 (WWIW…ISVN), and 765–785 (IGFG…TLAL). The segment at 821–841 (SSGSTRRPMGNGTENDSTIVD) is disordered. Residues 860–1112 (LSFDNVRYSV…ELIKYFESIP (253 aa)) enclose the ABC transporter 2 domain. 905-912 (GVSGAGKT) provides a ligand contact to ATP. The region spanning 1185–1399 (TQCMACLWKQ…TLYGLVVSQF (215 aa)) is the ABC transmembrane type-2 2 domain. The next 7 membrane-spanning stretches (helical) occupy residues 1209–1229 (FFFT…LGGK), 1244–1264 (YAAV…VVAV), 1292–1312 (IPYT…MIGF), 1319–1339 (FFWY…YGMM), 1349–1369 (IASI…GFVI), 1380–1400 (WYCW…SQFG), and 1429–1449 (WVAT…GFAI).

The protein belongs to the ABC transporter superfamily. ABCG family. PDR (TC 3.A.1.205) subfamily.

The protein localises to the membrane. Functionally, may be a general defense protein. This is ABC transporter G family member 36 from Oryza sativa subsp. indica (Rice).